The chain runs to 164 residues: MARRGRVQLRRIEDKASRQVRFSKRRAGLFKKAFELALLCDVEVALLVFSPVGKLYEYSSSSIEGTYDRYQQFAGARRDLNEGSTSINSDENASIHSRLRDITAWSLQNNADESDANQLEKLEKLLTNALRDTKSKKMLAKQNGEGSRSRANSSGSRGQEEGSA.

In terms of domain architecture, MADS-box spans alanine 2–serine 62. A disordered region spans residues threonine 133–alanine 164.

Widely expressed.

It localises to the nucleus. Its function is as follows. Probable transcription factor involved in the regulation of flowering time under short day (SD) conditions. Functions as a promoter of flowering under SD conditions, upstream of EHD1, HD3A and MADS14, but downstream of GIGANTEA (GI). May transmit a SD promotion signal from GI to EHD1. Functions independently of MADS50 to control flowering time. The polypeptide is MADS-box transcription factor 51 (Oryza sativa subsp. japonica (Rice)).